The primary structure comprises 178 residues: Large ribosomal subunit protein uL6 (178 aa).

This sequence belongs to the universal ribosomal protein uL6 family. In terms of assembly, part of the 50S ribosomal subunit.

Functionally, this protein binds to the 23S rRNA, and is important in its secondary structure. It is located near the subunit interface in the base of the L7/L12 stalk, and near the tRNA binding site of the peptidyltransferase center. The chain is Large ribosomal subunit protein uL6 from Streptococcus pneumoniae (strain ATCC 700669 / Spain 23F-1).